The following is a 458-amino-acid chain: Adenylosuccinate synthetase (458 aa).

Residues 17-23 (GDEGKGK) and 45-47 (GHT) each bind GTP. The Proton acceptor role is filled by aspartate 18. Mg(2+) contacts are provided by aspartate 18 and glycine 45. IMP is bound by residues 18 to 21 (DEGK), 43 to 46 (NAGH), threonine 137, arginine 151, glutamine 247, threonine 262, and arginine 330. The Proton donor role is filled by histidine 46. Residue 326–332 (VTTGRSR) coordinates substrate. GTP is bound by residues arginine 332, 358 to 360 (KLD), and 440 to 442 (STG).

The protein belongs to the adenylosuccinate synthetase family. Homodimer. Mg(2+) is required as a cofactor.

It is found in the cytoplasm. The enzyme catalyses IMP + L-aspartate + GTP = N(6)-(1,2-dicarboxyethyl)-AMP + GDP + phosphate + 2 H(+). The protein operates within purine metabolism; AMP biosynthesis via de novo pathway; AMP from IMP: step 1/2. In terms of biological role, plays an important role in the de novo pathway of purine nucleotide biosynthesis. Catalyzes the first committed step in the biosynthesis of AMP from IMP. This is Adenylosuccinate synthetase from Albidiferax ferrireducens (strain ATCC BAA-621 / DSM 15236 / T118) (Rhodoferax ferrireducens).